The primary structure comprises 349 residues: Putative nuclease HARBI1 (349 aa).

Residues 148–300 (VDCMHVAIKA…IILACCVLHN (153 aa)) enclose the DDE Tnp4 domain. The a divalent metal cation site is built by D149, D199, D225, and E261.

It belongs to the HARBI1 family. Interacts with NAIF1. It depends on a divalent metal cation as a cofactor. As to expression, detected in brain.

The protein resides in the nucleus. It localises to the cytoplasm. Its function is as follows. Transposase-derived protein that may have nuclease activity (Potential). Does not have transposase activity. This is Putative nuclease HARBI1 (HARBI1) from Bos taurus (Bovine).